The sequence spans 304 residues: Large ribosomal subunit protein uL18 (304 aa).

The segment at 285 to 304 (LNALNSSAGADDDDEEEDDE) is disordered. The span at 294-304 (ADDDDEEEDDE) shows a compositional bias: acidic residues.

The protein belongs to the universal ribosomal protein uL18 family. In terms of assembly, component of the large ribosomal subunit (LSU).

Its subcellular location is the cytoplasm. The protein localises to the nucleus. Component of the ribosome, a large ribonucleoprotein complex responsible for the synthesis of proteins in the cell. The small ribosomal subunit (SSU) binds messenger RNAs (mRNAs) and translates the encoded message by selecting cognate aminoacyl-transfer RNA (tRNA) molecules. The large subunit (LSU) contains the ribosomal catalytic site termed the peptidyl transferase center (PTC), which catalyzes the formation of peptide bonds, thereby polymerizing the amino acids delivered by tRNAs into a polypeptide chain. The nascent polypeptides leave the ribosome through a tunnel in the LSU and interact with protein factors that function in enzymatic processing, targeting, and the membrane insertion of nascent chains at the exit of the ribosomal tunnel. The protein is Large ribosomal subunit protein uL18 (RPL5A) of Oryza sativa subsp. indica (Rice).